We begin with the raw amino-acid sequence, 220 residues long: Glycerol-3-phosphate acyltransferase (220 aa).

The next 6 helical transmembrane spans lie at isoleucine 11–leucine 31, leucine 70–phenylalanine 90, leucine 96–phenylalanine 116, glycine 127–valine 147, isoleucine 153–proline 173, and methionine 193–alanine 213.

Belongs to the PlsY family. In terms of assembly, probably interacts with PlsX.

It localises to the cell inner membrane. The enzyme catalyses an acyl phosphate + sn-glycerol 3-phosphate = a 1-acyl-sn-glycero-3-phosphate + phosphate. It functions in the pathway lipid metabolism; phospholipid metabolism. Its function is as follows. Catalyzes the transfer of an acyl group from acyl-phosphate (acyl-PO(4)) to glycerol-3-phosphate (G3P) to form lysophosphatidic acid (LPA). This enzyme utilizes acyl-phosphate as fatty acyl donor, but not acyl-CoA or acyl-ACP. The protein is Glycerol-3-phosphate acyltransferase of Helicobacter pylori (strain HPAG1).